We begin with the raw amino-acid sequence, 177 residues long: Eggshell protein (177 aa).

The first 18 residues, 1–18, serve as a signal peptide directing secretion; it reads MKQSLTLVFLVAIGYATA. 5 repeat units span residues 25–41, 42–59, 60–75, 76–91, and 92–112. The 5 X approximate tandem repeats stretch occupies residues 25–112; sequence YSGGYGGGCY…GCSGGNCGGG (88 aa). A compositionally biased stretch (gly residues) spans 149 to 166; sequence GSGKGKGGGKGGKGGKGG. The tract at residues 149 to 177 is disordered; it reads GSGKGKGGGKGGKGGKGGTYKPSHYGGGY.

The polypeptide is Eggshell protein (F10) (Schistosoma mansoni (Blood fluke)).